Reading from the N-terminus, the 88-residue chain is Small ribosomal subunit protein bS16c (88 aa).

This sequence belongs to the bacterial ribosomal protein bS16 family.

It is found in the plastid. The protein localises to the chloroplast. The polypeptide is Small ribosomal subunit protein bS16c (Gossypium barbadense (Sea Island cotton)).